The chain runs to 98 residues: uncharacterized protein (98 aa).

This is an uncharacterized protein from Archaeoglobus fulgidus (strain ATCC 49558 / DSM 4304 / JCM 9628 / NBRC 100126 / VC-16).